Consider the following 302-residue polypeptide: UDP-N-acetylenolpyruvoylglucosamine reductase (302 aa).

An FAD-binding PCMH-type domain is found at 29–192 (KVGGPVDLLA…VAVTLQLSED (164 aa)). Arg-172 is a catalytic residue. Catalysis depends on Ser-221, which acts as the Proton donor. Glu-291 is a catalytic residue.

Belongs to the MurB family. FAD serves as cofactor.

It localises to the cytoplasm. It carries out the reaction UDP-N-acetyl-alpha-D-muramate + NADP(+) = UDP-N-acetyl-3-O-(1-carboxyvinyl)-alpha-D-glucosamine + NADPH + H(+). Its pathway is cell wall biogenesis; peptidoglycan biosynthesis. Its function is as follows. Cell wall formation. This Trichlorobacter lovleyi (strain ATCC BAA-1151 / DSM 17278 / SZ) (Geobacter lovleyi) protein is UDP-N-acetylenolpyruvoylglucosamine reductase.